The primary structure comprises 428 residues: Glutamate--tRNA ligase 2 (428 aa).

Positions 6-16 match the 'HIGH' region motif; it reads PSPTGDMRTEQ.

The protein belongs to the class-I aminoacyl-tRNA synthetase family. Glutamate--tRNA ligase type 1 subfamily. Monomer.

The protein resides in the cytoplasm. It carries out the reaction tRNA(Glu) + L-glutamate + ATP = L-glutamyl-tRNA(Glu) + AMP + diphosphate. Its function is as follows. Catalyzes the attachment of glutamate to tRNA(Glu) in a two-step reaction: glutamate is first activated by ATP to form Glu-AMP and then transferred to the acceptor end of tRNA(Glu). The protein is Glutamate--tRNA ligase 2 of Sulfurovum sp. (strain NBC37-1).